Consider the following 248-residue polypeptide: Probable transcriptional regulatory protein Oter_1471 (248 aa).

It belongs to the TACO1 family.

The protein localises to the cytoplasm. The polypeptide is Probable transcriptional regulatory protein Oter_1471 (Opitutus terrae (strain DSM 11246 / JCM 15787 / PB90-1)).